Consider the following 448-residue polypeptide: FAD-linked oxidoreductase nodO (448 aa).

Residues 35 to 206 enclose the FAD-binding PCMH-type domain; the sequence is PEHFPLAIVK…IRFFLKTCPL (172 aa).

It belongs to the oxygen-dependent FAD-linked oxidoreductase family. The cofactor is FAD.

It participates in secondary metabolite biosynthesis. Its function is as follows. FAD-linked oxidoreductase; part of the gene cluster that mediates the biosynthesis of the indole diterpenes nodulisporic acids (NA). Nodulisporic acid A (NAA) and its chemically modified derivatives are of particular significance because of their highly potent insecticidal activity against blood-feeding arthropods and lack of observable adverse effects on mammals, in particular the tremogenicity associated with the paspaline-derived IDTs is not observed. The geranylgeranyl diphosphate (GGPP) synthase ggs1, localized outside of the cluster, is proposed to catalyze the first step in nodulisporic acid biosynthesis via conversion of farnesyl pyrophosphate and isopentyl pyrophosphate into geranylgeranyl pyrophosphate (GGPP). Condensation of indole-3-glycerol phosphate with GGPP by the prenyl transferase nodC then forms 3-geranylgeranylindole (3-GGI). Epoxidation by the FAD-dependent monooxygenase nodM leads to a single-epoxidized-GGI that is substrate of the terpene cyclase nodB for cyclization to yield emindole SB. The terminal methyl carbon, C28, of emindole SB is then oxidized by the cytochrome P450 monooxygenase nodW to produce nodulisporic acid F (NAF), the pentacyclic core of NAA. NAF is converted to nodulisporic acid E (NAE) via prenylation. This step is probably performed by one of the indole diterpene prenyltransferases nodD1 or nodD2. Several oxidation steps performed by the FAD-linked oxidoreductase nodO and one of the cytochrome P450 monooxygenase nodR, nodX or nodZ further convert NAE to nodulisporic acid D (NAD). NAD is substrate of cytochrome P450 monooxygenase nodJ to produce the precursor of nodulisporic acid C (NAC), converted to NAC by one of the indole diterpene prenyltransferases nodD1 or nodD2. The FAD-dependent monooxygenase nodY2 then oxidizes NAC to nodulisporic acid B (NAB). Finally NAB is converted to NAA by one of the cytochrome P450 monooxygenases nodR, nodX or nodZ. The polypeptide is FAD-linked oxidoreductase nodO (Hypoxylon pulicicidum).